A 131-amino-acid chain; its full sequence is Holo-[acyl-carrier-protein] synthase (131 aa).

Residues aspartate 8 and glutamate 59 each coordinate Mg(2+).

It belongs to the P-Pant transferase superfamily. AcpS family. Mg(2+) serves as cofactor.

Its subcellular location is the cytoplasm. It carries out the reaction apo-[ACP] + CoA = holo-[ACP] + adenosine 3',5'-bisphosphate + H(+). Functionally, transfers the 4'-phosphopantetheine moiety from coenzyme A to a Ser of acyl-carrier-protein. In Orientia tsutsugamushi (strain Boryong) (Rickettsia tsutsugamushi), this protein is Holo-[acyl-carrier-protein] synthase.